Consider the following 90-residue polypeptide: MSLEKDKSTVINNYKLHESDTGSADVQIALLTDRINQLIEHLKLHKQDHHSRRGLLKLVGRRRRLLAYLSKKDNARFRAVSERLGLRIKA.

Belongs to the universal ribosomal protein uS15 family. As to quaternary structure, part of the 30S ribosomal subunit. Forms a bridge to the 50S subunit in the 70S ribosome, contacting the 23S rRNA.

Functionally, one of the primary rRNA binding proteins, it binds directly to 16S rRNA where it helps nucleate assembly of the platform of the 30S subunit by binding and bridging several RNA helices of the 16S rRNA. Its function is as follows. Forms an intersubunit bridge (bridge B4) with the 23S rRNA of the 50S subunit in the ribosome. The polypeptide is Small ribosomal subunit protein uS15 (Herpetosiphon aurantiacus (strain ATCC 23779 / DSM 785 / 114-95)).